The primary structure comprises 326 residues: Transmembrane protein 255B (326 aa).

Transmembrane regions (helical) follow at residues 26–46, 55–75, 85–105, and 200–220; these read LWFVGSLLLVSVLIVTVGLAA, VGGYYPGIILGFGSFLGIIGI, LVAAIVFISFGVVAAFCCAIV, and AVLNVLGLFLGIITAAVLGAF. The segment at 284–326 is disordered; the sequence is LASSEDLQPPSPSSSGSGLPGQAPPCYAPTYFPPGEKPPPYAP. The segment covering 305 to 326 has biased composition (pro residues); sequence QAPPCYAPTYFPPGEKPPPYAP.

The protein belongs to the TMEM255 family.

Its subcellular location is the membrane. In Homo sapiens (Human), this protein is Transmembrane protein 255B (TMEM255B).